The following is a 383-amino-acid chain: MHC class I polypeptide-related sequence A (383 aa).

Residues 1 to 23 (MGLGPVFLLLAGIFPFAPPGAAA) form the signal peptide. At 24-307 (EPHSLRYNLT…GKVLVLQSHW (284 aa)) the chain is on the extracellular side. A glycan (N-linked (GlcNAc...) asparagine) is linked at N31. A disulfide bridge links C59 with C64. A glycan (N-linked (GlcNAc...) asparagine) is linked at N79. C119 and C187 are joined by a disulfide. In terms of domain architecture, Ig-like C1-type spans 207 to 296 (PMVNVTRSEA…SGNHSTHPVP (90 aa)). N-linked (GlcNAc...) asparagine glycans are attached at residues N210, N220, and N261. C225 and C282 are joined by a disulfide. Residues 308 to 328 (QTFHVSAVAAAAIFVIIIFYV) traverse the membrane as a helical segment. The Cytoplasmic portion of the chain corresponds to 329–383 (RCCKKKTSAAEGPELVSLQVLDQHPVGTSDHRDATQLGFQPLMSDLGSTGSTEGA). S-palmitoyl cysteine attachment occurs at residues C330 and C331.

It belongs to the MHC class I family. MIC subfamily. In terms of assembly, unlike classical MHC class I molecules, does not form a heterodimer with beta-2-microglobulin. Binds as a monomer to a KLRK1/NKG2D homodimer. KLRK1 forms a complex with HCST/DAP10 in which KLRK1 binds MICA while HCST acts as an adapter molecule which enables signal transduction. Interacts with PDIA6 on the surface of tumor cells, leading to disulfide bond reduction which is required for release of MICA from tumor cells. (Microbial infection) Interacts with human cytomegalovirus/HHV-5 protein UL142. In terms of processing, N-glycosylated. Glycosylation is not essential for interaction with KLRK1/NKG2D but enhances complex formation. Proteolytically cleaved and released from the cell surface of tumor cells which impairs KLRK1/NKG2D expression and T-cell activation. Post-translationally, palmitoylated on cysteine residues in the cytoplasmic tail leading to its association with membrane microdomains enriched in cholesterol. In terms of processing, N-glycosylation is necessary for cell surface expression. (Microbial infection) Ubiquitinated by human herpesvirus 8 protein K5, leading to degradation. Widely expressed with the exception of the central nervous system where it is absent. Expressed predominantly in gastric epithelium and also in monocytes, keratinocytes, endothelial cells, fibroblasts and in the outer layer of Hassal's corpuscles within the medulla of normal thymus. In skin, expressed mainly in the keratin layers, basal cells, ducts and follicles. Also expressed in many, but not all, epithelial tumors of lung, breast, kidney, ovary, prostate and colon. In thyomas, overexpressed in cortical and medullar epithelial cells. Tumors expressing MICA display increased levels of gamma delta T-cells.

It is found in the cell membrane. It localises to the cytoplasm. In terms of biological role, widely expressed membrane-bound protein which acts as a ligand to stimulate an activating receptor KLRK1/NKG2D, expressed on the surface of essentially all human natural killer (NK), gammadelta T and CD8 alphabeta T-cells. Up-regulated in stressed conditions, such as viral and bacterial infections or DNA damage response, serves as signal of cellular stress, and engagement of KLRK1/NKG2D by MICA triggers NK-cells resulting in a range of immune effector functions, such as cytotoxicity and cytokine production. In Homo sapiens (Human), this protein is MHC class I polypeptide-related sequence A.